The sequence spans 494 residues: MELNLLLVIIILVATYTVSLLNKQWRKPKSQQKQPPKLPVIGHLHLLWGGLPPQHLLRSIAREYGPVAHVQLGEVYSVVLSSAEAAKQAMKVLDPNFADRFDSVGSRIMWYDNDDIIFSPYNDHWHQMRKICVSELLSPKNVRSFGFIRQEEIERLIRVMKQSEGAPVDVTEEVSKMSCFVVCRAAFGSVLKDQGSLAELVKESLAMASGFELKDLYPSSWLLNLLSFNNYRLKRMRRRLDHVLDGFLEEHRVKKNGEFGGEDIVDVLFRMQKDSNIKIPITSNGIKGFIFNTFSAGAEASSTTISWALSELMRNPAKMAKVQAEVREALKGKTSVDLSEMQELKYMRSVVKETLRLHPPFPLIPRQSREECEINGFYIPARTRILINAWSIGRDPLYWEDPDTFRPERFDEVSRDFMGNDFEFIPFGAGQRICPGLHFGLANVEIPLAQLLYHFDWKLPQGMTDADLYVAGTPGLSGPRKKNVFLVPTIHKSR.

A helical; Signal-anchor for type II membrane protein membrane pass occupies residues 1–21 (MELNLLLVIIILVATYTVSLL). A heme-binding site is contributed by C434.

It belongs to the cytochrome P450 family. Heme serves as cofactor.

The protein localises to the endoplasmic reticulum membrane. Its function is as follows. Cytochrome P450 oxygenase of undefined substrate. Not active with limonene, (+)- or (-)-piperitone, (-)-isopiperitone, piperitenone or (+)-pulegone. This chain is Cytochrome P450 71D94 (CYP71D94), found in Mentha gracilis (Gingermint).